A 2153-amino-acid chain; its full sequence is Genome polyprotein (2153 aa).

A lipid anchor (N-myristoyl glycine; by host) is attached at Gly2. The Cytoplasmic portion of the chain corresponds to 2–1466 (GAQVSRQNVG…DLNIANSIIT (1465 aa)). Positions 565–582 (PITQNPVERYVDEVLNEV) are amphipathic alpha-helix. Residues His871 and Asp888 each act as for protease 2A activity in the active site. Zn(2+) contacts are provided by Cys905 and Cys907. Catalysis depends on Cys959, which acts as the For protease 2A activity. Zn(2+) contacts are provided by Cys965 and His967. The segment at 1091–1160 (SDSWLKKFTE…NLRAADTNTQ (70 aa)) is membrane-binding. An oligomerization region spans residues 1091-1224 (SDSWLKKFTE…PPGTGKSITT (134 aa)). The segment at 1112–1116 (GNKIS) is RNA-binding. The 161-residue stretch at 1186–1346 (KRIKVLYHKC…YKDNQGKLDV (161 aa)) folds into the SF3 helicase domain. 3 residues coordinate Zn(2+): Cys1353, Cys1364, and Cys1369. The C4-type; degenerate zinc finger occupies 1353–1369 (CDVDSKIGNAKCCPFVC). The interval 1396 to 1403 (EDKRRRQV) is RNA-binding. The oligomerization stretch occupies residues 1407 to 1412 (MSAIFQ). An intramembrane segment occupies 1467–1482 (IIANIISIAGIIYIIY). The Cytoplasmic portion of the chain corresponds to 1483-2153 (KLFCSLQGPY…LLRHEWYEKF (671 aa)). O-(5'-phospho-RNA)-tyrosine is present on Tyr1492. In terms of domain architecture, Peptidase C3 spans 1511 to 1689 (GPEEEFGMSI…FSSMLLRSYF (179 aa)). Active-site for protease 3C activity residues include His1550, Glu1581, and Cys1657. The RdRp catalytic domain occupies 1921–2034 (DCIMAFDYTN…SYKYKLDMEA (114 aa)). Mg(2+) contacts are provided by Asp1927 and Asp2020.

Belongs to the picornaviruses polyprotein family. Interacts with capsid protein VP1 and capsid protein VP3 to form heterotrimeric protomers. As to quaternary structure, interacts with capsid protein VP0, and capsid protein VP3 to form heterotrimeric protomers. Five protomers subsequently associate to form pentamers which serve as building blocks for the capsid. Interacts with capsid protein VP2, capsid protein VP3 and capsid protein VP4 following cleavage of capsid protein VP0. In terms of assembly, interacts with capsid protein VP1 and capsid protein VP3 in the mature capsid. Interacts with capsid protein VP0 and capsid protein VP1 to form heterotrimeric protomers. Five protomers subsequently associate to form pentamers which serve as building blocks for the capsid. Interacts with capsid protein VP4 in the mature capsid. Interacts with protein 2C; this interaction may be important for virion morphogenesis. As to quaternary structure, interacts with capsid protein VP1 and capsid protein VP3. In terms of assembly, homodimer. Homohexamer; forms a hexameric ring structure with 6-fold symmetry characteristic of AAA+ ATPases. Interacts (via N-terminus) with host RTN3 (via reticulon domain); this interaction is important for viral replication. Interacts with capsid protein VP3; this interaction may be important for virion morphogenesis. As to quaternary structure, interacts with protein 3CD. In terms of assembly, homodimer. Interacts with host GBF1. Interacts (via GOLD domain) with host ACBD3 (via GOLD domain); this interaction allows the formation of a viral protein 3A/ACBD3 heterotetramer with a 2:2 stoichiometry, which will stimulate the recruitment of host PI4KB in order to synthesize PI4P at the viral RNA replication sites. Interacts with RNA-directed RNA polymerase. As to quaternary structure, interacts with protein 3AB and with RNA-directed RNA polymerase. In terms of assembly, interacts with Viral protein genome-linked and with protein 3CD. It depends on Mg(2+) as a cofactor. In terms of processing, specific enzymatic cleavages in vivo by the viral proteases yield processing intermediates and the mature proteins. Myristoylation is required for the formation of pentamers during virus assembly. Further assembly of 12 pentamers and a molecule of genomic RNA generates the provirion. Post-translationally, during virion maturation, immature virions are rendered infectious following cleavage of VP0 into VP4 and VP2. This maturation seems to be an autocatalytic event triggered by the presence of RNA in the capsid and it is followed by a conformational change infectious virion. In terms of processing, myristoylation is required during RNA encapsidation and formation of the mature virus particle. VPg is uridylylated by the polymerase into VPg-pUpU. This acts as a nucleotide-peptide primer for the genomic RNA replication.

It is found in the virion. The protein localises to the host cytoplasm. It localises to the host cytoplasmic vesicle membrane. Its subcellular location is the host nucleus. The enzyme catalyses a ribonucleoside 5'-triphosphate + H2O = a ribonucleoside 5'-diphosphate + phosphate + H(+). It carries out the reaction Selective cleavage of Tyr-|-Gly bond in the picornavirus polyprotein.. The catalysed reaction is RNA(n) + a ribonucleoside 5'-triphosphate = RNA(n+1) + diphosphate. It catalyses the reaction Selective cleavage of Gln-|-Gly bond in the poliovirus polyprotein. In other picornavirus reactions Glu may be substituted for Gln, and Ser or Thr for Gly.. Replication or transcription is subject to high level of random mutations by the nucleotide analog ribavirin. Its function is as follows. Forms an icosahedral capsid of pseudo T=3 symmetry with capsid proteins VP2 and VP3. The capsid is 300 Angstroms in diameter, composed of 60 copies of each capsid protein and enclosing the viral positive strand RNA genome. Capsid protein VP1 mainly forms the vertices of the capsid. Capsid protein VP1 interacts with host cell receptor to provide virion attachment to target host cells. This attachment induces virion internalization. Tyrosine kinases are probably involved in the entry process. After binding to its receptor, the capsid undergoes conformational changes. Capsid protein VP1 N-terminus (that contains an amphipathic alpha-helix) and capsid protein VP4 are externalized. Together, they shape a pore in the host membrane through which viral genome is translocated to host cell cytoplasm. In terms of biological role, forms an icosahedral capsid of pseudo T=3 symmetry with capsid proteins VP2 and VP3. The capsid is 300 Angstroms in diameter, composed of 60 copies of each capsid protein and enclosing the viral positive strand RNA genome. Functionally, lies on the inner surface of the capsid shell. After binding to the host receptor, the capsid undergoes conformational changes. Capsid protein VP4 is released, Capsid protein VP1 N-terminus is externalized, and together, they shape a pore in the host membrane through which the viral genome is translocated into the host cell cytoplasm. Component of immature procapsids, which is cleaved into capsid proteins VP4 and VP2 after maturation. Allows the capsid to remain inactive before the maturation step. Its function is as follows. Cysteine protease that cleaves viral polyprotein and specific host proteins. It is responsible for the autocatalytic cleavage between the P1 and P2 regions, which is the first cleavage occurring in the polyprotein. Also cleaves the host translation initiation factor EIF4G1, in order to shut down the capped cellular mRNA translation. Inhibits the host nucleus-cytoplasm protein and RNA trafficking by cleaving host members of the nuclear pores. Counteracts stress granule formation probably by antagonizing its assembly or promoting its dissassembly. In terms of biological role, plays an essential role in the virus replication cycle by acting as a viroporin. Creates a pore in the host endoplasmic reticulum and as a consequence releases Ca2+ in the cytoplasm of infected cell. In turn, high levels of cytoplasmic calcium may trigger membrane trafficking and transport of viral ER-associated proteins to viroplasms, sites of viral genome replication. Functionally, induces and associates with structural rearrangements of intracellular membranes. Displays RNA-binding, nucleotide binding and NTPase activities. May play a role in virion morphogenesis and viral RNA encapsidation by interacting with the capsid protein VP3. Localizes the viral replication complex to the surface of membranous vesicles. It inhibits host cell endoplasmic reticulum-to-Golgi apparatus transport and causes the disassembly of the Golgi complex, possibly through GBF1 interaction. This would result in depletion of MHC, trail receptors and IFN receptors at the host cell surface. Plays an essential role in viral RNA replication by recruiting ACBD3 and PI4KB at the viral replication sites, thereby allowing the formation of the rearranged membranous structures where viral replication takes place. Its function is as follows. Acts as a primer for viral RNA replication and remains covalently bound to viral genomic RNA. VPg is uridylylated prior to priming replication into VPg-pUpU. The oriI viral genomic sequence may act as a template for this. The VPg-pUpU is then used as primer on the genomic RNA poly(A) by the RNA-dependent RNA polymerase to replicate the viral genome. During genome replication, the VPg-RNA linkage is removed by the host TDP2, thereby accelerating replication. During the late stage of the replication cycle, host TDP2 is excluded from sites of viral RNA synthesis and encapsidation, allowing for the generation of progeny virions. In terms of biological role, involved in the viral replication complex and viral polypeptide maturation. It exhibits protease activity with a specificity and catalytic efficiency that is different from protease 3C. Protein 3CD lacks polymerase activity. Protein 3CD binds to the 5'UTR of the viral genome. Functionally, major viral protease that mediates proteolytic processing of the polyprotein. Cleaves host EIF5B, contributing to host translation shutoff. Also cleaves host PABPC1, contributing to host translation shutoff. Cleaves host NLRP1, triggers host N-glycine-mediated degradation of the autoinhibitory NLRP1 N-terminal fragment. Replicates the viral genomic RNA on the surface of intracellular membranes. May form linear arrays of subunits that propagate along a strong head-to-tail interaction called interface-I. Covalently attaches UMP to a tyrosine of VPg, which is used to prime RNA synthesis. The positive stranded RNA genome is first replicated at virus induced membranous vesicles, creating a dsRNA genomic replication form. This dsRNA is then used as template to synthesize positive stranded RNA genomes. ss(+)RNA genomes are either translated, replicated or encapsidated. This chain is Genome polyprotein, found in Human rhinovirus 16 (HRV-16).